The sequence spans 164 residues: Phosphatidyl-N-methylethanolamine N-methyltransferase (164 aa).

The segment at residues 1 to 21 (MGLLAAIGVLLPFPFYWWLWT) is an intramembrane region (helical). The Lumenal segment spans residues 22–30 (NAQSWVNLC). Residues 31–52 (GRERDPSTVMARVSHVLKAAQL) form a helical membrane-spanning segment. Residues 53-69 (LSLFSVASLSWPPPLYF) are Cytoplasmic-facing. Residues 70–90 (WPLMAFGQFLNFRVYQLLGEA) form a helical membrane-spanning segment. S-adenosyl-L-methionine is bound at residue 74-76 (AFG). Residues 91-131 (GTYYGVRFGKNIPWVTEFPFGVIRDPQYVGSIMSLLACLSW) lie on the Lumenal side of the membrane. A helical transmembrane segment spans residues 132 to 151 (VPFQYILLWSLGYVFMMFLE). At 152-164 (SKEDPNARAKSIS) the chain is on the cytoplasmic side. 154-155 (ED) serves as a coordination point for S-adenosyl-L-methionine.

This sequence belongs to the class VI-like SAM-binding methyltransferase superfamily. PEMT/PEM2 methyltransferase family.

It localises to the endoplasmic reticulum membrane. The catalysed reaction is a 1,2-diacyl-sn-glycero-3-phospho-N-methylethanolamine + S-adenosyl-L-methionine = a 1,2-diacyl-sn-glycero-3-phospho-N,N-dimethylethanolamine + S-adenosyl-L-homocysteine + H(+). The enzyme catalyses a 1,2-diacyl-sn-glycero-3-phospho-N,N-dimethylethanolamine + S-adenosyl-L-methionine = a 1,2-diacyl-sn-glycero-3-phosphocholine + S-adenosyl-L-homocysteine + H(+). It participates in phospholipid metabolism; phosphatidylcholine biosynthesis. Catalyzes the second two steps of the methylation pathway of phosphatidylcholine biosynthesis, the SAM-dependent methylation of phosphatidylmonomethylethanolamine (PMME) to phosphatidyldimethylethanolamine (PDME) and of PDME to phosphatidylcholine (PC). In Arabidopsis thaliana (Mouse-ear cress), this protein is Phosphatidyl-N-methylethanolamine N-methyltransferase (PLMT).